Consider the following 371-residue polypeptide: Peptidyl-prolyl cis-trans isomerase D (371 aa).

The PPIase cyclophilin-type domain maps to 8 to 172 (FFDIAIGGQL…EPVVIADCGQ (165 aa)). The disordered stretch occupies residues 175–202 (SDDPFLAERTSTDGDPYEDYPDDEDQEL). The segment covering 189–201 (DPYEDYPDDEDQE) has biased composition (acidic residues). 3 TPR repeats span residues 212 to 245 (AKTI…LDVH), 265 to 303 (APLL…LELS), and 308 to 341 (AKAY…LPED).

It belongs to the cyclophilin-type PPIase family. PPIase D subfamily.

It is found in the cytoplasm. It carries out the reaction [protein]-peptidylproline (omega=180) = [protein]-peptidylproline (omega=0). PPIases accelerate the folding of proteins. It catalyzes the cis-trans isomerization of proline imidic peptide bonds in oligopeptides. This Amanita muscaria (Fly agaric) protein is Peptidyl-prolyl cis-trans isomerase D (Cyp40).